A 127-amino-acid chain; its full sequence is Mitochondrial pyruvate carrier 2 (127 aa).

Topologically, residues 2–40 are mitochondrial matrix; it reads SAAGARGLRATYHRLLDKVELMLPEKLRPLYNHPAGPRT. The helical transmembrane segment at 41 to 61 threads the bilayer; that stretch reads VFFWAPIMKWGLVCAGLADMA. The Mitochondrial intermembrane segment spans residues 62 to 72; the sequence is RPAEKLSTAQS. The chain crosses the membrane as a helical span at residues 73 to 90; sequence AVLMATGFIWSRYSLVII. Residues 91 to 95 lie on the Mitochondrial matrix side of the membrane; sequence PKNWS. A helical transmembrane segment spans residues 96–115; the sequence is LFAVNFFVGAAGASQLFRIW. The Mitochondrial intermembrane portion of the chain corresponds to 116–127; the sequence is RYNQELKAKAHK.

This sequence belongs to the mitochondrial pyruvate carrier (MPC) (TC 2.A.105) family. As to quaternary structure, homodimer. Homooligomer. Forms heterodimers with MPC1 and MPC1L. The heterodimer is the more stable and dominant form.

It localises to the mitochondrion inner membrane. The catalysed reaction is pyruvate(out) + H(+)(out) = pyruvate(in) + H(+)(in). Mediates the uptake of pyruvate into mitochondria. This Homo sapiens (Human) protein is Mitochondrial pyruvate carrier 2 (MPC2).